The chain runs to 272 residues: HMP-PP phosphatase (272 aa).

D8 serves as the catalytic Nucleophile. 3 residues coordinate Mg(2+): D8, D10, and D212.

This sequence belongs to the HAD-like hydrolase superfamily. Cof family. Mg(2+) serves as cofactor.

It carries out the reaction 4-amino-2-methyl-5-(diphosphooxymethyl)pyrimidine + H2O = 4-amino-2-methyl-5-(phosphooxymethyl)pyrimidine + phosphate + H(+). Its function is as follows. Catalyzes the hydrolysis of 4-amino-2-methyl-5-hydroxymethylpyrimidine pyrophosphate (HMP-PP) to 4-amino-2-methyl-5-hydroxymethylpyrimidine phosphate (HMP-P). This Salmonella agona (strain SL483) protein is HMP-PP phosphatase.